Here is an 85-residue protein sequence, read N- to C-terminus: Large ribosomal subunit protein bL27 (85 aa).

It belongs to the bacterial ribosomal protein bL27 family.

In Vesicomyosocius okutanii subsp. Calyptogena okutanii (strain HA), this protein is Large ribosomal subunit protein bL27.